The sequence spans 429 residues: Phosphoribosylamine--glycine ligase (429 aa).

Residues 109-316 (KDFLARHNIP…LVELCLAACE (208 aa)) form the ATP-grasp domain. 135 to 196 (LREKGAPIVI…EEFLDGEEAS (62 aa)) contacts ATP. The interval 212–236 (SQDHKRVGDKDTGPNTGGMGAYSPA) is disordered. A compositionally biased stretch (basic and acidic residues) spans 213–223 (QDHKRVGDKDT). Mg(2+)-binding residues include E286 and N288.

This sequence belongs to the GARS family. In terms of assembly, monomer. Mg(2+) serves as cofactor. Mn(2+) is required as a cofactor.

The catalysed reaction is 5-phospho-beta-D-ribosylamine + glycine + ATP = N(1)-(5-phospho-beta-D-ribosyl)glycinamide + ADP + phosphate + H(+). Its pathway is purine metabolism; IMP biosynthesis via de novo pathway; N(1)-(5-phospho-D-ribosyl)glycinamide from 5-phospho-alpha-D-ribose 1-diphosphate: step 2/2. This chain is Phosphoribosylamine--glycine ligase, found in Escherichia coli O6:H1 (strain CFT073 / ATCC 700928 / UPEC).